The sequence spans 204 residues: FlaA locus 22.9 kDa protein (204 aa).

The tract at residues 115 to 140 (EKTAEDQKKSSEDHTEGSADSKASSE) is disordered.

The chain is FlaA locus 22.9 kDa protein (ylxF) from Bacillus subtilis (strain 168).